The chain runs to 120 residues: Large ribosomal subunit protein bL19c (120 aa).

Belongs to the bacterial ribosomal protein bL19 family.

The protein localises to the plastid. It localises to the chloroplast. This is Large ribosomal subunit protein bL19c (rpl19) from Trieres chinensis (Marine centric diatom).